A 316-amino-acid polypeptide reads, in one-letter code: Conjugated bile acid hydrolase (316 aa).

Cysteine 2 acts as the Nucleophile in catalysis. 2 residues coordinate deoxycholate: cysteine 2 and arginine 18. Asparagine 81 contacts taurine.

Belongs to the peptidase C59 family.

It carries out the reaction cholate + taurine = taurocholate + H2O. It catalyses the reaction taurodeoxycholate + H2O = deoxycholate + taurine. The catalysed reaction is taurochenodeoxycholate + H2O = chenodeoxycholate + taurine. The enzyme catalyses glycocholate + H2O = cholate + glycine. It functions in the pathway lipid metabolism; bile acid biosynthesis. With respect to regulation, glycocholate hydrolysis is inhibited by various previously identified BSH inhibitors, including KIO(3), NaHIO(3), NaIO(4), CuCl(2), menadione, riboflavin, gossypetin, and the antibiotics oxytetracycline, demeclocycline hydrochloride and methacycline hydrochloride. Its function is as follows. Bile salt hydrolase that catalyzes the deconjugation of glycine- and taurine-linked bile salts, which occurs naturally in the intestines of animals, releasing amino acid residues and deconjugated bile salts (bile acids). Can hydrolyze the amide bond in the bile salts taurocholate (TCA), taurodeoxycholate (TDCA), taurochenodeoxycholate (TCDCA), taurohyodeoxycholate (THDCA) and tauroursodeoxycholate (TUDCA). Oh et al. did not detect activity with the glycine-conjugated bile salts glycocholate (GCA), glycodeoxycholate (GDCA) and glycochenodeoxycholate (GCDCA). However, a later study shows activity toward glycocholate (GCA). This chain is Conjugated bile acid hydrolase, found in Lactobacillus acidophilus.